Reading from the N-terminus, the 153-residue chain is Transcriptional repressor NrdR (153 aa).

A zinc finger lies at 3-34; the sequence is CPFCGKENTRVIDSRPADDCSSIRRRRQCDEC. The ATP-cone domain maps to 49 to 139; that stretch reads LVVIKKDNNR…VYREFKDVNT (91 aa).

It belongs to the NrdR family. Zn(2+) is required as a cofactor.

Functionally, negatively regulates transcription of bacterial ribonucleotide reductase nrd genes and operons by binding to NrdR-boxes. This is Transcriptional repressor NrdR from Lachnoclostridium phytofermentans (strain ATCC 700394 / DSM 18823 / ISDg) (Clostridium phytofermentans).